The sequence spans 304 residues: Ribosomal RNA small subunit methyltransferase H (304 aa).

S-adenosyl-L-methionine-binding positions include 50 to 52 (GGH), aspartate 69, phenylalanine 97, aspartate 113, and glutamine 120.

The protein belongs to the methyltransferase superfamily. RsmH family.

The protein resides in the cytoplasm. The catalysed reaction is cytidine(1402) in 16S rRNA + S-adenosyl-L-methionine = N(4)-methylcytidine(1402) in 16S rRNA + S-adenosyl-L-homocysteine + H(+). Functionally, specifically methylates the N4 position of cytidine in position 1402 (C1402) of 16S rRNA. This chain is Ribosomal RNA small subunit methyltransferase H, found in Rippkaea orientalis (strain PCC 8801 / RF-1) (Cyanothece sp. (strain PCC 8801)).